The following is a 250-amino-acid chain: Proteasome subunit alpha (250 aa).

This sequence belongs to the peptidase T1A family. In terms of assembly, the 20S proteasome core is composed of 14 alpha and 14 beta subunits that assemble into four stacked heptameric rings, resulting in a barrel-shaped structure. The two inner rings, each composed of seven catalytic beta subunits, are sandwiched by two outer rings, each composed of seven alpha subunits. The catalytic chamber with the active sites is on the inside of the barrel. Has a gated structure, the ends of the cylinder being occluded by the N-termini of the alpha-subunits. Is capped by the proteasome-associated ATPase, ARC.

Its subcellular location is the cytoplasm. It functions in the pathway protein degradation; proteasomal Pup-dependent pathway. With respect to regulation, the formation of the proteasomal ATPase ARC-20S proteasome complex, likely via the docking of the C-termini of ARC into the intersubunit pockets in the alpha-rings, may trigger opening of the gate for substrate entry. Interconversion between the open-gate and close-gate conformations leads to a dynamic regulation of the 20S proteasome proteolysis activity. Component of the proteasome core, a large protease complex with broad specificity involved in protein degradation. This chain is Proteasome subunit alpha, found in Mycobacterium sp. (strain JLS).